A 396-amino-acid polypeptide reads, in one-letter code: Elongation factor Tu (396 aa).

Residues 10–206 (KPHLNIGTIG…AVDENVPDPV (197 aa)) enclose the tr-type G domain. A G1 region spans residues 19–26 (GHVDHGKT). Position 19–26 (19–26 (GHVDHGKT)) interacts with GTP. T26 is a binding site for Mg(2+). Residues 62 to 66 (GITIN) form a G2 region. Positions 83-86 (DAPG) are G3. GTP-binding positions include 83 to 87 (DAPGH) and 138 to 141 (NKSD). Residues 138–141 (NKSD) are G4. The segment at 176–178 (SAL) is G5.

This sequence belongs to the TRAFAC class translation factor GTPase superfamily. Classic translation factor GTPase family. EF-Tu/EF-1A subfamily. Monomer.

The protein resides in the cytoplasm. It carries out the reaction GTP + H2O = GDP + phosphate + H(+). In terms of biological role, GTP hydrolase that promotes the GTP-dependent binding of aminoacyl-tRNA to the A-site of ribosomes during protein biosynthesis. This Kocuria rhizophila (strain ATCC 9341 / DSM 348 / NBRC 103217 / DC2201) protein is Elongation factor Tu.